Reading from the N-terminus, the 456-residue chain is Equilibrative nucleoside transporter 2 (456 aa).

The chain crosses the membrane as a helical span at residues 13 to 33; the sequence is LVGISFFILGLGTLLPWNFFI. N-linked (GlcNAc...) asparagine glycosylation is present at asparagine 56. 5 helical membrane-spanning segments follow: residues 69-89, 98-118, 123-143, 161-181, and 192-212; these read WVTL…SFLY, ILGS…LVKV, GLFF…CAVL, LFLS…LMSL, and LGYF…YLSL. The interval 248–277 is disordered; that stretch reads GVPISPQQASPTLDLDPEKEPEPEEPQKPG. A Phosphoserine modification is found at serine 252. The segment covering 263–275 has biased composition (basic and acidic residues); sequence DPEKEPEPEEPQK. A run of 5 helical transmembrane segments spans residues 288–308, 323–343, 360–380, 396–416, and 432–452; these read IWLT…VFPA, WGLF…DWLG, LLPL…LCHV, FITF…LTMC, and ALMT…SFLF.

It belongs to the SLC29A/ENT transporter (TC 2.A.57) family.

It is found in the apical cell membrane. The protein localises to the basolateral cell membrane. Its subcellular location is the nucleus membrane. The enzyme catalyses inosine(in) = inosine(out). It carries out the reaction adenosine(in) = adenosine(out). It catalyses the reaction uridine(out) = uridine(in). The catalysed reaction is thymidine(in) = thymidine(out). The enzyme catalyses hypoxanthine(out) = hypoxanthine(in). It carries out the reaction adenine(out) = adenine(in). It catalyses the reaction cytidine(in) = cytidine(out). The catalysed reaction is thymine(out) = thymine(in). The enzyme catalyses uracil(in) = uracil(out). It carries out the reaction guanine(out) = guanine(in). It catalyses the reaction guanosine(in) = guanosine(out). Functionally, bidirectional uniporter involved in the facilitative transport of nucleosides and nucleobases, and contributes to maintaining their cellular homeostasis. Functions as a Na(+)-independent, passive transporter. Involved in the transport of nucleosides such as inosine, adenosine, uridine, thymidine, cytidine and guanosine. Also able to transport purine nucleobases (hypoxanthine, adenine, guanine) and pyrimidine nucleobases (thymine, uracil). Involved in nucleoside transport at basolateral membrane of kidney cells, allowing liver absorption of nucleoside metabolites. Mediates apical nucleoside uptake into Sertoli cells, thereby regulating the transport of nucleosides in testis across the blood-testis-barrier. Mediates both the influx and efflux of hypoxanthine in skeletal muscle microvascular endothelial cells to control the amount of intracellular hypoxanthine available for xanthine oxidase-mediated ROS production. This chain is Equilibrative nucleoside transporter 2, found in Mus musculus (Mouse).